We begin with the raw amino-acid sequence, 212 residues long: Ras-related protein Rab-15 (212 aa).

10 residues coordinate GTP: Ser17, Gly18, Val19, Gly20, Lys21, Thr22, Cys23, Ser35, Ser39, and Thr40. Residue Thr22 participates in Mg(2+) binding. 2 short sequence motifs (switch) span residues 31-45 (NEFH…GVDF) and 63-80 (DTAG…YYRR). Mg(2+) contacts are provided by Thr40 and Asp63. Residues Gly66, Asn121, Lys122, Asp124, Ser151, and Ala152 each contribute to the GTP site. The segment at 192 to 212 (ELEEDEGKPEGPANSSKTCWC) is disordered. Residues Cys210 and Cys212 are each lipidated (S-geranylgeranyl cysteine). The residue at position 212 (Cys212) is a Cysteine methyl ester.

It belongs to the small GTPase superfamily. Rab family. As to quaternary structure, the GTP bound form of RAB15 interacts with REP15. Interacts (GTP-bound form) with MICAL1, MICAL3, MICALCL, EHBP1 and EHBP1L1. Mg(2+) is required as a cofactor.

It localises to the cell membrane. The enzyme catalyses GTP + H2O = GDP + phosphate + H(+). Its activity is regulated as follows. Regulated by guanine nucleotide exchange factors (GEFs) which promote the exchange of bound GDP for free GTP. Regulated by GTPase activating proteins (GAPs) which increase the GTP hydrolysis activity. Inhibited by GDP dissociation inhibitors (GDIs). Its function is as follows. The small GTPases Rab are key regulators of intracellular membrane trafficking, from the formation of transport vesicles to their fusion with membranes. Rabs cycle between an inactive GDP-bound form and an active GTP-bound form that is able to recruit to membranes different sets of downstream effectors directly responsible for vesicle formation, movement, tethering and fusion. RAB15 may act in concert with RAB3A in regulating aspects of synaptic vesicle membrane flow within the nerve terminal. This is Ras-related protein Rab-15 (RAB15) from Bos taurus (Bovine).